The primary structure comprises 525 residues: GMP synthase [glutamine-hydrolyzing] (525 aa).

Residues 16 to 205 (PVLVVDFGAQ…LHDFAGLGAQ (190 aa)) enclose the Glutamine amidotransferase type-1 domain. Cys-93 (nucleophile) is an active-site residue. Residues His-179 and Glu-181 contribute to the active site. The 194-residue stretch at 206–399 (WTPANIANAL…LGLPEEIVAR (194 aa)) folds into the GMPS ATP-PPase domain. Residue 233 to 239 (SGGVDSA) coordinates ATP.

Homodimer.

It carries out the reaction XMP + L-glutamine + ATP + H2O = GMP + L-glutamate + AMP + diphosphate + 2 H(+). It participates in purine metabolism; GMP biosynthesis; GMP from XMP (L-Gln route): step 1/1. Functionally, catalyzes the synthesis of GMP from XMP. In Mycobacterium bovis (strain BCG / Pasteur 1173P2), this protein is GMP synthase [glutamine-hydrolyzing].